Here is a 521-residue protein sequence, read N- to C-terminus: Apolipoprotein N-acyltransferase (521 aa).

Transmembrane regions (helical) follow at residues 24–44, 71–91, 128–148, 151–171, and 182–202; these read IKET…FIAL, WLGF…IGYI, IGFL…FNNL, IADI…NSGI, and NLLN…YGMI. The region spanning 218-472 is the CN hydrolase domain; sequence LNIAAIQLNT…KGYLLSTVKL (255 aa). Glu-263 serves as the catalytic Proton acceptor. Lys-331 is an active-site residue. The active-site Nucleophile is the Cys-383.

The protein belongs to the CN hydrolase family. Apolipoprotein N-acyltransferase subfamily.

The protein localises to the cell inner membrane. The catalysed reaction is N-terminal S-1,2-diacyl-sn-glyceryl-L-cysteinyl-[lipoprotein] + a glycerophospholipid = N-acyl-S-1,2-diacyl-sn-glyceryl-L-cysteinyl-[lipoprotein] + a 2-acyl-sn-glycero-3-phospholipid + H(+). Its pathway is protein modification; lipoprotein biosynthesis (N-acyl transfer). In terms of biological role, catalyzes the phospholipid dependent N-acylation of the N-terminal cysteine of apolipoprotein, the last step in lipoprotein maturation. The protein is Apolipoprotein N-acyltransferase of Borreliella burgdorferi (strain ATCC 35210 / DSM 4680 / CIP 102532 / B31) (Borrelia burgdorferi).